Consider the following 867-residue polypeptide: DNA mismatch repair protein MutS (867 aa).

606-613 (GPNMSGKS) contacts ATP.

It belongs to the DNA mismatch repair MutS family.

This protein is involved in the repair of mismatches in DNA. It is possible that it carries out the mismatch recognition step. This protein has a weak ATPase activity. The protein is DNA mismatch repair protein MutS of Oceanobacillus iheyensis (strain DSM 14371 / CIP 107618 / JCM 11309 / KCTC 3954 / HTE831).